The sequence spans 448 residues: StAR-related lipid transfer protein 3 (448 aa).

Residues 47–219 (FSDVRRTFCL…YSPPESLAGS (173 aa)) enclose the MENTAL domain. The next 4 membrane-spanning stretches (helical) occupy residues 53-73 (TFCL…IIEL), 96-116 (FFDI…GYAA), 122-142 (WWVI…KVIL), and 150-170 (AFGY…TWFL). The FFAT motif lies at 208–214 (QFYSPPE). In terms of domain architecture, START spans 232–445 (AVTEQEKAFV…LRQRINEVHV (214 aa)).

Belongs to the STARD3 family. Homodimer. Phosphorylated. Phosphorylation allows the tethering of two membranes that participates in the formation of ER-endosome contacts. Phosphorylation of FFAT motif drives membrane tethering between the endoplasmic reticulum and late endosomes that in turn allows the efficient transport of sterol mediated by the START domain.

It localises to the late endosome membrane. It carries out the reaction cholesterol(in) = cholesterol(out). Functionally, sterol-binding protein that mediates cholesterol transport from the endoplasmic reticulum to endosomes. The sterol transport mechanism is triggered by phosphorylation of FFAT motif that leads to membrane tethering between the endoplasmic reticulum and late endosomes. Acts as a lipid transfer protein that redirects sterol to the endosome at the expense of the cell membrane and favors membrane formation inside endosomes. The protein is StAR-related lipid transfer protein 3 of Danio rerio (Zebrafish).